Reading from the N-terminus, the 386-residue chain is NADH-ubiquinone oxidoreductase 49 kDa subunit homolog (386 aa).

It belongs to the complex I 49 kDa subunit family.

It localises to the mitochondrion. It catalyses the reaction a ubiquinone + NADH + 5 H(+)(in) = a ubiquinol + NAD(+) + 4 H(+)(out). In terms of biological role, core subunit of the mitochondrial membrane respiratory chain NADH dehydrogenase (Complex I) that is believed to belong to the minimal assembly required for catalysis. Complex I functions in the transfer of electrons from NADH to the respiratory chain. The immediate electron acceptor for the enzyme is believed to be ubiquinone. Component of the iron-sulfur (IP) fragment of the enzyme. Component of the iron-sulfur (IP) fragment of the enzyme. This is NADH-ubiquinone oxidoreductase 49 kDa subunit homolog (NAD7) from Trypanosoma brucei brucei.